The primary structure comprises 115 residues: U3-lycotoxin-Ls1n (115 aa).

The N-terminal stretch at 1-20 (MKFVLLFGVLLVTLFSYSSA) is a signal peptide. A propeptide spanning residues 21–44 (EMLDDFDQADEDELLSLIEKEEAR) is cleaved from the precursor. Disulfide bonds link C48-C63, C55-C72, C62-C87, and C74-C85.

It belongs to the neurotoxin 19 (CSTX) family. 01 subfamily. In terms of tissue distribution, expressed by the venom gland.

The protein localises to the secreted. This Lycosa singoriensis (Wolf spider) protein is U3-lycotoxin-Ls1n.